We begin with the raw amino-acid sequence, 39 residues long: Photosystem II reaction center protein L (39 aa).

The helical transmembrane segment at 18–38 threads the bilayer; it reads SLYLGLLFVFVTGVLMSSYFF.

The protein belongs to the PsbL family. As to quaternary structure, PSII is composed of 1 copy each of membrane proteins PsbA, PsbB, PsbC, PsbD, PsbE, PsbF, PsbH, PsbI, PsbJ, PsbK, PsbL, PsbM, PsbT, PsbX, PsbY, PsbZ, Psb30/Ycf12, peripheral proteins PsbO, CyanoQ (PsbQ), PsbU, PsbV and a large number of cofactors. It forms dimeric complexes.

Its subcellular location is the cellular thylakoid membrane. Its function is as follows. One of the components of the core complex of photosystem II (PSII). PSII is a light-driven water:plastoquinone oxidoreductase that uses light energy to abstract electrons from H(2)O, generating O(2) and a proton gradient subsequently used for ATP formation. It consists of a core antenna complex that captures photons, and an electron transfer chain that converts photonic excitation into a charge separation. This subunit is found at the monomer-monomer interface and is required for correct PSII assembly and/or dimerization. The chain is Photosystem II reaction center protein L from Synechococcus sp. (strain CC9902).